The primary structure comprises 634 residues: DNA-directed RNA polymerase subunit gamma (634 aa).

Zn(2+)-binding residues include cysteine 74, cysteine 76, cysteine 89, and cysteine 92. Mg(2+)-binding residues include aspartate 471, aspartate 473, and aspartate 475.

The protein belongs to the RNA polymerase beta' chain family. RpoC1 subfamily. In terms of assembly, in cyanobacteria the RNAP catalytic core is composed of 2 alpha, 1 beta, 1 beta', 1 gamma and 1 omega subunit. When a sigma factor is associated with the core the holoenzyme is formed, which can initiate transcription. Mg(2+) serves as cofactor. The cofactor is Zn(2+).

The catalysed reaction is RNA(n) + a ribonucleoside 5'-triphosphate = RNA(n+1) + diphosphate. Functionally, DNA-dependent RNA polymerase catalyzes the transcription of DNA into RNA using the four ribonucleoside triphosphates as substrates. This Synechococcus sp. (strain CC9902) protein is DNA-directed RNA polymerase subunit gamma.